We begin with the raw amino-acid sequence, 98 residues long: Small ribosomal subunit protein bS20 (98 aa).

It belongs to the bacterial ribosomal protein bS20 family.

Its function is as follows. Binds directly to 16S ribosomal RNA. The chain is Small ribosomal subunit protein bS20 from Kosmotoga olearia (strain ATCC BAA-1733 / DSM 21960 / TBF 19.5.1).